Consider the following 363-residue polypeptide: UDP-N-acetylglucosamine--N-acetylmuramyl-(pentapeptide) pyrophosphoryl-undecaprenol N-acetylglucosamine transferase (363 aa).

UDP-N-acetyl-alpha-D-glucosamine is bound by residues 10–12, asparagine 124, serine 195, isoleucine 250, and glutamine 295; that span reads TGG.

It belongs to the glycosyltransferase 28 family. MurG subfamily.

The protein resides in the cell membrane. The enzyme catalyses di-trans,octa-cis-undecaprenyl diphospho-N-acetyl-alpha-D-muramoyl-L-alanyl-D-glutamyl-meso-2,6-diaminopimeloyl-D-alanyl-D-alanine + UDP-N-acetyl-alpha-D-glucosamine = di-trans,octa-cis-undecaprenyl diphospho-[N-acetyl-alpha-D-glucosaminyl-(1-&gt;4)]-N-acetyl-alpha-D-muramoyl-L-alanyl-D-glutamyl-meso-2,6-diaminopimeloyl-D-alanyl-D-alanine + UDP + H(+). The protein operates within cell wall biogenesis; peptidoglycan biosynthesis. Its function is as follows. Cell wall formation. Catalyzes the transfer of a GlcNAc subunit on undecaprenyl-pyrophosphoryl-MurNAc-pentapeptide (lipid intermediate I) to form undecaprenyl-pyrophosphoryl-MurNAc-(pentapeptide)GlcNAc (lipid intermediate II). This chain is UDP-N-acetylglucosamine--N-acetylmuramyl-(pentapeptide) pyrophosphoryl-undecaprenol N-acetylglucosamine transferase, found in Listeria monocytogenes serotype 4a (strain HCC23).